Consider the following 347-residue polypeptide: Protein NDL3 (347 aa).

Belongs to the NDRG family. In terms of assembly, interacts with the heterodimers formed by GB1 and GG1, or GB1 and GG2. Interacts with RGS1.

It is found in the cytoplasm. Functionally, involved in a signaling pathway that modulates root auxin transport and auxin gradients. Acts partially by positively regulating the auxin carrier PIN2 and AUX1. Acts, together with GB1 as positive regulator of meristem initiation and branching. GB1 and NDL3 positively regulate basipetal inflorescence auxin transport and modulate MAX2 expression in shoots, which regulates organ and lateral meristem formation by the establishment and maintenance of auxin gradients. In Arabidopsis thaliana (Mouse-ear cress), this protein is Protein NDL3.